We begin with the raw amino-acid sequence, 110 residues long: Large ribosomal subunit protein uL22 (110 aa).

It belongs to the universal ribosomal protein uL22 family. In terms of assembly, part of the 50S ribosomal subunit.

Functionally, this protein binds specifically to 23S rRNA; its binding is stimulated by other ribosomal proteins, e.g. L4, L17, and L20. It is important during the early stages of 50S assembly. It makes multiple contacts with different domains of the 23S rRNA in the assembled 50S subunit and ribosome. In terms of biological role, the globular domain of the protein is located near the polypeptide exit tunnel on the outside of the subunit, while an extended beta-hairpin is found that lines the wall of the exit tunnel in the center of the 70S ribosome. This Exiguobacterium sp. (strain ATCC BAA-1283 / AT1b) protein is Large ribosomal subunit protein uL22.